Reading from the N-terminus, the 393-residue chain is Acetate kinase (393 aa).

Asparagine 6 contributes to the Mg(2+) binding site. Residue lysine 13 participates in ATP binding. Arginine 87 serves as a coordination point for substrate. The active-site Proton donor/acceptor is the aspartate 143. Residues 203–207, 278–280, and 326–330 each bind ATP; these read HLGNG, DMR, and GIGEN. Mg(2+) is bound at residue glutamate 380.

The protein belongs to the acetokinase family. In terms of assembly, homodimer. Requires Mg(2+) as cofactor. It depends on Mn(2+) as a cofactor.

It is found in the cytoplasm. The catalysed reaction is acetate + ATP = acetyl phosphate + ADP. It functions in the pathway metabolic intermediate biosynthesis; acetyl-CoA biosynthesis; acetyl-CoA from acetate: step 1/2. Its function is as follows. Catalyzes the formation of acetyl phosphate from acetate and ATP. Can also catalyze the reverse reaction. The sequence is that of Acetate kinase from Mycoplasma mycoides subsp. mycoides SC (strain CCUG 32753 / NCTC 10114 / PG1).